The following is a 172-amino-acid chain: NADH-ubiquinone oxidoreductase chain 6 (172 aa).

5 helical membrane-spanning segments follow: residues 1-21 (MTNY…GLAL), 26-48 (IYGG…GFGG), 52-74 (GLMV…TAMA), 86-106 (WFIF…FYLF), and 147-167 (CATW…FIII).

Belongs to the complex I subunit 6 family. In terms of assembly, core subunit of respiratory chain NADH dehydrogenase (Complex I) which is composed of 45 different subunits.

Its subcellular location is the mitochondrion inner membrane. The catalysed reaction is a ubiquinone + NADH + 5 H(+)(in) = a ubiquinol + NAD(+) + 4 H(+)(out). Core subunit of the mitochondrial membrane respiratory chain NADH dehydrogenase (Complex I) which catalyzes electron transfer from NADH through the respiratory chain, using ubiquinone as an electron acceptor. Essential for the catalytic activity and assembly of complex I. The sequence is that of NADH-ubiquinone oxidoreductase chain 6 from Rattus norvegicus (Rat).